Consider the following 474-residue polypeptide: Transmembrane transporter FVEG_12640 (474 aa).

Over residues 1 to 15 (MASPTISSMEQYTPS) the composition is skewed to polar residues. A disordered region spans residues 1–39 (MASPTISSMEQYTPSSKDEKIVPLHGDAAGSDTEKGESR). The next 10 helical transmembrane spans lie at 72 to 92 (ILAI…LCIV), 133 to 153 (LVGV…IVTS), 164 to 184 (GTCT…FSSI), 192 to 212 (WLTW…VVAV), 231 to 251 (WAPI…NIFI), 275 to 295 (ACLV…LVIY), 317 to 337 (VAYG…QHVA), 364 to 384 (LGIN…VPIL), 387 to 407 (LLGL…PALL), and 431 to 451 (LIMI…AVLI).

It belongs to the amino acid/polyamine transporter 2 family.

It is found in the membrane. Transmembrane transporter; part of the Fusarium detoxification of benzoxazolinone cluster 2 (FDB2) involved in the degradation of benzoxazolinones produced by the host plant. Maize, wheat, and rye produce the 2 benzoxazinone phytoanticipins 2,4-dihy-droxy-7-methoxy-1,4-benzoxazin-3-one (DIMBOA) and 2,4-dihydroxy-1,4-benzoxazin-3-one (DIBOA) that, due to their inherent instability once released, spontaneously degrade to the more stable corresponding benzoxazolinones, 6-methoxy-2-benzoxazolinone (MBOA) and 2-benzoxazolinone (BOA), respectively. Might be involved in the transport of metabolites of benzoxazolinone degradation. This chain is Transmembrane transporter FVEG_12640, found in Gibberella moniliformis (strain M3125 / FGSC 7600) (Maize ear and stalk rot fungus).